A 375-amino-acid polypeptide reads, in one-letter code: MSKRDYYEVLGVGKSASKDEIKKAYRKLSKKYHPDINKEAGAAEKFKEVKEAYETLSDDQKRAHYDQFGHTDPNQGFGGGGFGGGDFGGFGFDDIFSSIFGGGARRRDPNAPRQGADLQYTMTLSFEEAAFGKETTIEIPREETCETCSGSGAKPGTKPETCSHCGGSGQLNMEQSTPFGKVVNRRVCHYCNGTGKQIKHKCSTCGGTGKVKKRKKINVTIPAGVDDGQQLRVAGQGEPGINGGPSGDLFVVFRVQEHEFFERDGDDIYCEMPLTFAQAALGDEIEVPTLHGKVKLKVPAGTQTGTKFRLKGKGVANVRGYGQGDQHIVVRVVTPTNLTENQKNILREFAEVSGNMPDEQEMSFFDKVKRAFKGD.

A J domain is found at 5-69 (DYYEVLGVGK…QKRAHYDQFG (65 aa)). The CR-type zinc-finger motif lies at 132 to 214 (GKETTIEIPR…CGGTGKVKKR (83 aa)). Zn(2+) contacts are provided by Cys-145, Cys-148, Cys-162, Cys-165, Cys-188, Cys-191, Cys-202, and Cys-205. 4 CXXCXGXG motif repeats span residues 145–152 (CETCSGSG), 162–169 (CSHCGGSG), 188–195 (CHYCNGTG), and 202–209 (CSTCGGTG).

This sequence belongs to the DnaJ family. Homodimer. Zn(2+) is required as a cofactor.

It localises to the cytoplasm. In terms of biological role, participates actively in the response to hyperosmotic and heat shock by preventing the aggregation of stress-denatured proteins and by disaggregating proteins, also in an autonomous, DnaK-independent fashion. Unfolded proteins bind initially to DnaJ; upon interaction with the DnaJ-bound protein, DnaK hydrolyzes its bound ATP, resulting in the formation of a stable complex. GrpE releases ADP from DnaK; ATP binding to DnaK triggers the release of the substrate protein, thus completing the reaction cycle. Several rounds of ATP-dependent interactions between DnaJ, DnaK and GrpE are required for fully efficient folding. Also involved, together with DnaK and GrpE, in the DNA replication of plasmids through activation of initiation proteins. The polypeptide is Chaperone protein DnaJ (Bacillus licheniformis (strain ATCC 14580 / DSM 13 / JCM 2505 / CCUG 7422 / NBRC 12200 / NCIMB 9375 / NCTC 10341 / NRRL NRS-1264 / Gibson 46)).